Here is a 508-residue protein sequence, read N- to C-terminus: Early growth response protein 1 (508 aa).

2 disordered regions span residues 18–78 and 136–210; these read PQFL…ESFS and MTNP…QYPP. Over residues 33–42 the composition is skewed to low complexity; it reads NNSSSSSSSS. Residues 43-52 are compositionally biased toward gly residues; it reads SGGGGGGGSN. Residues 139 to 164 show a composition bias toward low complexity; that stretch reads PPTSSSSAPSPAASSSSSASQSPPLS. Residue K278 forms a Glycyl lysine isopeptide (Lys-Gly) (interchain with G-Cter in SUMO2) linkage. The disordered stretch occupies residues 292–311; it reads SRMRKYPNRPSKTPPHERPY. 3 consecutive C2H2-type zinc fingers follow at residues 311–335, 341–363, and 369–391; these read YACPVESCDRRFSRSDELTRHIRIH, FQCRICMRNFSRSDHLTTHIRTH, and FACDICGRKFARSDERKRHTKIH. The segment at 382-453 is disordered; that stretch reads DERKRHTKIH…SSTYPSPAHS (72 aa). Residues 386-396 are compositionally biased toward basic residues; sequence RHTKIHLRQKD. Positions 402–450 are enriched in low complexity; sequence SVVASSAASSLSSYPSPVATSYPSPATTSFPSPVPTSYSSPGSSTYPSP. 7 tandem repeats follow at residues 413 to 420, 421 to 428, 429 to 436, 437 to 444, 445 to 452, 453 to 460, and 462 to 468. Positions 413–468 are 7 X 8 AA tandem repeats of [TS](2)-[FY]-[PS]-S-P-[GSAV]-X; it reads SSYPSPVATSYPSPATTSFPSPVPTSYSSPGSSTYPSPAHSGFPSPSVATTYASVP.

The protein belongs to the EGR C2H2-type zinc-finger protein family. Interacts with SNAI1 and SP1 upon 12-O-tetradecanoylphorbol-13-acetate (TPA) induction. In terms of tissue distribution, detected in kidney thick ascending limbs and collecting ducts (at protein level).

It is found in the nucleus. The protein resides in the cytoplasm. Transcriptional regulator. Recognizes and binds to the DNA sequence 5'-GCG(T/G)GGGCG-3'(EGR-site) in the promoter region of target genes. Binds double-stranded target DNA, irrespective of the cytosine methylation status. Regulates the transcription of numerous target genes, and thereby plays an important role in regulating the response to growth factors, DNA damage, and ischemia. Plays a role in the regulation of cell survival, proliferation and cell death. Activates expression of p53/TP53 and TGFB1, and thereby helps prevent tumor formation. Required for normal progress through mitosis and normal proliferation of hepatocytes after partial hepatectomy. Mediates responses to ischemia and hypoxia; regulates the expression of proteins such as IL1B and CXCL2 that are involved in inflammatory processes and development of tissue damage after ischemia. Regulates biosynthesis of luteinizing hormone (LHB) in the pituitary. Regulates the amplitude of the expression rhythms of clock genes: BMAL1, PER2 and NR1D1 in the liver via the activation of PER1 (clock repressor) transcription. Regulates the rhythmic expression of core-clock gene BMAL1 in the suprachiasmatic nucleus (SCN). Regulates biosynthesis of glucocorticoid receptor GR/NR3C1 in the hippocampus and thereby may play a role in the behavioral and hypothalamic-pituitary-adrenal responses to stress in offspring. The protein is Early growth response protein 1 (Egr1) of Rattus norvegicus (Rat).